The primary structure comprises 368 residues: D-alanine--D-alanine ligase (368 aa).

In terms of domain architecture, ATP-grasp spans lysine 151–aspartate 358. Residue lysine 179–glutamate 234 coordinates ATP. Mg(2+) is bound by residues aspartate 313, glutamate 325, and asparagine 327.

This sequence belongs to the D-alanine--D-alanine ligase family. Requires Mg(2+) as cofactor. Mn(2+) serves as cofactor.

Its subcellular location is the cytoplasm. It carries out the reaction 2 D-alanine + ATP = D-alanyl-D-alanine + ADP + phosphate + H(+). Its pathway is cell wall biogenesis; peptidoglycan biosynthesis. Functionally, cell wall formation. The polypeptide is D-alanine--D-alanine ligase (Rhodococcus erythropolis (strain PR4 / NBRC 100887)).